The following is an 89-amino-acid chain: Cell division protein ZapA (89 aa).

The protein belongs to the ZapA family. Type 2 subfamily. Homodimer. Interacts with FtsZ.

Its subcellular location is the cytoplasm. Its function is as follows. Activator of cell division through the inhibition of FtsZ GTPase activity, therefore promoting FtsZ assembly into bundles of protofilaments necessary for the formation of the division Z ring. It is recruited early at mid-cell but it is not essential for cell division. This chain is Cell division protein ZapA, found in Bacillus thuringiensis (strain Al Hakam).